Consider the following 542-residue polypeptide: ABC transport system permease protein p69 (542 aa).

12 consecutive transmembrane segments (helical) span residues Ala-23–Phe-43, Ile-77–Leu-97, Phe-114–Phe-134, Ala-140–Phe-160, Leu-212–Val-232, Leu-236–Phe-256, Val-287–Leu-307, Thr-350–Ala-370, Leu-386–Phe-406, Ile-412–Phe-432, Leu-481–Glu-501, and Gly-509–Val-529. The ABC transmembrane type-1 domain occupies Thr-349–Leu-526.

This sequence belongs to the binding-protein-dependent transport system permease family.

It localises to the cell membrane. Functionally, probably part of a high-affinity transport system. The polypeptide is ABC transport system permease protein p69 (p69) (Mycoplasma pneumoniae (strain ATCC 29342 / M129 / Subtype 1) (Mycoplasmoides pneumoniae)).